The sequence spans 530 residues: NADH-quinone oxidoreductase subunit C/D (530 aa).

An NADH dehydrogenase I subunit C region spans residues 1–144; it reads MEEIKYIEPA…NPLRMDNEET (144 aa). An NADH dehydrogenase I subunit D region spans residues 171-530; sequence EYVVNIGPQH…LDYVVPDIDR (360 aa).

This sequence in the N-terminal section; belongs to the complex I 30 kDa subunit family. In the C-terminal section; belongs to the complex I 49 kDa subunit family. NDH-1 is composed of 13 different subunits. Subunits NuoB, CD, E, F, and G constitute the peripheral sector of the complex.

It localises to the cell inner membrane. It catalyses the reaction a quinone + NADH + 5 H(+)(in) = a quinol + NAD(+) + 4 H(+)(out). In terms of biological role, NDH-1 shuttles electrons from NADH, via FMN and iron-sulfur (Fe-S) centers, to quinones in the respiratory chain. The immediate electron acceptor for the enzyme in this species is believed to be a menaquinone. Couples the redox reaction to proton translocation (for every two electrons transferred, four hydrogen ions are translocated across the cytoplasmic membrane), and thus conserves the redox energy in a proton gradient. The sequence is that of NADH-quinone oxidoreductase subunit C/D from Bacteroides fragilis (strain ATCC 25285 / DSM 2151 / CCUG 4856 / JCM 11019 / LMG 10263 / NCTC 9343 / Onslow / VPI 2553 / EN-2).